An 89-amino-acid chain; its full sequence is Nucleoside triphosphatase I (89 aa).

The 48-residue stretch at 42-89 folds into the Helicase ATP-binding domain; the sequence is FLGLDKMHSLLLFHDTGVGKTITTTFIIKQLKNIYTNWSILLLVKKHL. Position 55 to 62 (55 to 62) interacts with ATP; sequence HDTGVGKT.

Belongs to the helicase family. NPH I subfamily.

It catalyses the reaction a ribonucleoside 5'-triphosphate + H2O = a ribonucleoside 5'-diphosphate + phosphate + H(+). Its function is as follows. Serves two roles in transcription; it acts in concert with viral termination factor/capping enzyme to catalyze release of UUUUUNU-containing nascent RNA from the elongation complex, and it acts by itself as a polymerase elongation factor to facilitate readthrough of intrinsic pause sites. This Swinepox virus (strain Kasza) (SWPV) protein is Nucleoside triphosphatase I (NPH1).